A 111-amino-acid chain; its full sequence is Universal stress protein B (111 aa).

Transmembrane regions (helical) follow at residues 1 to 21 and 90 to 110; these read MIST…NMAR and FILT…LMLW.

Belongs to the universal stress protein B family.

The protein localises to the cell inner membrane. The polypeptide is Universal stress protein B (Yersinia pseudotuberculosis serotype O:1b (strain IP 31758)).